A 517-amino-acid polypeptide reads, in one-letter code: Maturase K (517 aa).

Belongs to the intron maturase 2 family. MatK subfamily.

The protein resides in the plastid. The protein localises to the chloroplast. In terms of biological role, usually encoded in the trnK tRNA gene intron. Probably assists in splicing its own and other chloroplast group II introns. The sequence is that of Maturase K from Acer pseudoplatanus (Sycamore maple).